A 332-amino-acid chain; its full sequence is Biotin synthase (332 aa).

Positions 51 to 279 (YKVQLASLLS…RSRVRLSAGR (229 aa)) constitute a Radical SAM core domain. The [4Fe-4S] cluster site is built by cysteine 66, cysteine 70, and cysteine 73. [2Fe-2S] cluster is bound by residues cysteine 110, cysteine 142, cysteine 202, and arginine 274.

Belongs to the radical SAM superfamily. Biotin synthase family. Homodimer. It depends on [4Fe-4S] cluster as a cofactor. [2Fe-2S] cluster serves as cofactor.

It carries out the reaction (4R,5S)-dethiobiotin + (sulfur carrier)-SH + 2 reduced [2Fe-2S]-[ferredoxin] + 2 S-adenosyl-L-methionine = (sulfur carrier)-H + biotin + 2 5'-deoxyadenosine + 2 L-methionine + 2 oxidized [2Fe-2S]-[ferredoxin]. It functions in the pathway cofactor biosynthesis; biotin biosynthesis; biotin from 7,8-diaminononanoate: step 2/2. Catalyzes the conversion of dethiobiotin (DTB) to biotin by the insertion of a sulfur atom into dethiobiotin via a radical-based mechanism. This chain is Biotin synthase, found in Prochlorococcus marinus (strain SARG / CCMP1375 / SS120).